A 408-amino-acid polypeptide reads, in one-letter code: Phosphoglycerate kinase (408 aa).

Substrate contacts are provided by residues 24–26, Arg-39, 62–65, Arg-121, and Arg-161; these read DLN and HLGR. ATP-binding positions include Lys-211, Gly-307, Glu-338, and 364–367; that span reads GGDS.

It belongs to the phosphoglycerate kinase family. As to quaternary structure, monomer.

The protein resides in the cytoplasm. It catalyses the reaction (2R)-3-phosphoglycerate + ATP = (2R)-3-phospho-glyceroyl phosphate + ADP. Its pathway is carbohydrate degradation; glycolysis; pyruvate from D-glyceraldehyde 3-phosphate: step 2/5. The protein is Phosphoglycerate kinase of Pseudarthrobacter chlorophenolicus (strain ATCC 700700 / DSM 12829 / CIP 107037 / JCM 12360 / KCTC 9906 / NCIMB 13794 / A6) (Arthrobacter chlorophenolicus).